The following is a 525-amino-acid chain: Cytochrome P450 4V2 (525 aa).

Residues 14–34 (LLWGAASAVSLAGATILISIF) traverse the membrane as a helical segment. Positions 329 and 467 each coordinate heme.

It belongs to the cytochrome P450 family. It depends on heme as a cofactor.

It localises to the endoplasmic reticulum membrane. The enzyme catalyses dodecanoate + reduced [NADPH--hemoprotein reductase] + O2 = 12-hydroxydodecanoate + oxidized [NADPH--hemoprotein reductase] + H2O + H(+). The catalysed reaction is tetradecanoate + reduced [NADPH--hemoprotein reductase] + O2 = 14-hydroxytetradecanoate + oxidized [NADPH--hemoprotein reductase] + H2O + H(+). It carries out the reaction hexadecanoate + reduced [NADPH--hemoprotein reductase] + O2 = 16-hydroxyhexadecanoate + oxidized [NADPH--hemoprotein reductase] + H2O + H(+). It catalyses the reaction (5Z,8Z,11Z,14Z,17Z)-eicosapentaenoate + reduced [NADPH--hemoprotein reductase] + O2 = 20-hydroxy-(5Z,8Z,11Z,14Z,17Z)-eicosapentaenoate + oxidized [NADPH--hemoprotein reductase] + H2O + H(+). The enzyme catalyses (4Z,7Z,10Z,13Z,16Z,19Z)-docosahexaenoate + reduced [NADPH--hemoprotein reductase] + O2 = 22-hydroxy-(4Z,7Z,10Z,13Z,16Z,19Z)-docosahexaenoate + oxidized [NADPH--hemoprotein reductase] + H2O + H(+). The protein operates within lipid metabolism; fatty acid metabolism. Inhibited by N-hydroxy-N'-(4-n-butyl-2-methylphenyl formamidine)(HET0016) with an IC(50) of 38 nM. Functionally, a cytochrome P450 monooxygenase involved in fatty acid metabolism in the eye. Catalyzes the omega-hydroxylation of polyunsaturated fatty acids (PUFAs) docosahexaenoate (DHA) and its precursor eicosapentaenoate (EPA), and may contribute to the homeostasis of these retinal PUFAs. Omega hydroxylates saturated fatty acids such as laurate, myristate and palmitate, the catalytic efficiency decreasing in the following order: myristate &gt; laurate &gt; palmitate (C14&gt;C12&gt;C16). Mechanistically, uses molecular oxygen inserting one oxygen atom into a substrate, and reducing the second into a water molecule, with two electrons provided by NADPH via cytochrome P450 reductase (CPR; NADPH-ferrihemoprotein reductase). The protein is Cytochrome P450 4V2 (Cyp4v2) of Mus musculus (Mouse).